The chain runs to 694 residues: Elongation factor G (694 aa).

A tr-type G domain is found at 9–288 (DAIRNIGIMA…VIVKWLPSPL (280 aa)). Residues 18–25 (AHIDAGKT), 82–86 (DTPGH), and 136–139 (NKMD) contribute to the GTP site.

This sequence belongs to the TRAFAC class translation factor GTPase superfamily. Classic translation factor GTPase family. EF-G/EF-2 subfamily.

It localises to the cytoplasm. Catalyzes the GTP-dependent ribosomal translocation step during translation elongation. During this step, the ribosome changes from the pre-translocational (PRE) to the post-translocational (POST) state as the newly formed A-site-bound peptidyl-tRNA and P-site-bound deacylated tRNA move to the P and E sites, respectively. Catalyzes the coordinated movement of the two tRNA molecules, the mRNA and conformational changes in the ribosome. The sequence is that of Elongation factor G (fusA) from Chlamydia muridarum (strain MoPn / Nigg).